Here is a 511-residue protein sequence, read N- to C-terminus: Bifunctional purine biosynthesis protein PurH (511 aa).

An MGS-like domain is found at 1–145 (MKKRALVSVS…KNHKFVSVIV (145 aa)).

The protein belongs to the PurH family.

It carries out the reaction (6R)-10-formyltetrahydrofolate + 5-amino-1-(5-phospho-beta-D-ribosyl)imidazole-4-carboxamide = 5-formamido-1-(5-phospho-D-ribosyl)imidazole-4-carboxamide + (6S)-5,6,7,8-tetrahydrofolate. The catalysed reaction is IMP + H2O = 5-formamido-1-(5-phospho-D-ribosyl)imidazole-4-carboxamide. The protein operates within purine metabolism; IMP biosynthesis via de novo pathway; 5-formamido-1-(5-phospho-D-ribosyl)imidazole-4-carboxamide from 5-amino-1-(5-phospho-D-ribosyl)imidazole-4-carboxamide (10-formyl THF route): step 1/1. It functions in the pathway purine metabolism; IMP biosynthesis via de novo pathway; IMP from 5-formamido-1-(5-phospho-D-ribosyl)imidazole-4-carboxamide: step 1/1. This chain is Bifunctional purine biosynthesis protein PurH, found in Bacillus cereus (strain B4264).